A 373-amino-acid chain; its full sequence is Thyroid hormone receptor beta-A (373 aa).

Residues 1–18 (MPSSMSGYIPSYLDKDEL) form a modulating region. 2 NR C4-type zinc fingers span residues 19 to 39 (CVVC…CEGC) and 57 to 81 (CKYE…FKKC). Positions 19 to 93 (CVVCGDKATG…VGMATDLVLD (75 aa)) form a DNA-binding region, nuclear receptor. The 245-residue stretch at 129 to 373 (EEWELIQVVT…PPLFLEVFED (245 aa)) folds into the NR LBD domain.

The protein belongs to the nuclear hormone receptor family. NR1 subfamily.

Its subcellular location is the nucleus. Its function is as follows. High affinity receptor for triiodothyronine (T3). This is Thyroid hormone receptor beta-A (thrb-a) from Xenopus laevis (African clawed frog).